The chain runs to 101 residues: Urease subunit beta (101 aa).

This sequence belongs to the urease beta subunit family. As to quaternary structure, heterotrimer of UreA (gamma), UreB (beta) and UreC (alpha) subunits. Three heterotrimers associate to form the active enzyme.

Its subcellular location is the cytoplasm. The enzyme catalyses urea + 2 H2O + H(+) = hydrogencarbonate + 2 NH4(+). The protein operates within nitrogen metabolism; urea degradation; CO(2) and NH(3) from urea (urease route): step 1/1. The sequence is that of Urease subunit beta from Mesorhizobium japonicum (strain LMG 29417 / CECT 9101 / MAFF 303099) (Mesorhizobium loti (strain MAFF 303099)).